Here is a 987-residue protein sequence, read N- to C-terminus: Mediator of RNA polymerase II transcription subunit 24 (987 aa).

Short sequence motifs (LXXLL motif) lie at residues 128–132, 344–348, 446–450, 555–559, 786–790, and 855–859; these read LHWLL, LTPLL, LDLLL, LVALL, LPGLL, and LMRLL. S860 and S871 each carry phosphoserine.

Belongs to the Mediator complex subunit 24 family. In terms of assembly, component of the Mediator complex, which is composed of MED1, MED4, MED6, MED7, MED8, MED9, MED10, MED11, MED12, MED13, MED13L, MED14, MED15, MED16, MED17, MED18, MED19, MED20, MED21, MED22, MED23, MED24, MED25, MED26, MED27, MED29, MED30, MED31, CCNC, CDK8 and CDC2L6/CDK11. The MED12, MED13, CCNC and CDK8 subunits form a distinct module termed the CDK8 module. Mediator containing the CDK8 module is less active than Mediator lacking this module in supporting transcriptional activation. Individual preparations of the Mediator complex lacking one or more distinct subunits have been variously termed ARC, CRSP, DRIP, PC2, SMCC and TRAP. Interacts with AR.

It localises to the nucleus. Functionally, component of the Mediator complex, a coactivator involved in the regulated transcription of nearly all RNA polymerase II-dependent genes. Mediator functions as a bridge to convey information from gene-specific regulatory proteins to the basal RNA polymerase II transcription machinery. Mediator is recruited to promoters by direct interactions with regulatory proteins and serves as a scaffold for the assembly of a functional preinitiation complex with RNA polymerase II and the general transcription factors. This is Mediator of RNA polymerase II transcription subunit 24 (Med24) from Rattus norvegicus (Rat).